Consider the following 861-residue polypeptide: Glucans biosynthesis glucosyltransferase H (861 aa).

6 helical membrane passes run 142 to 162 (FILLLLMLAQTSVATYYMKGI), 188 to 208 (VLPYVIQFGILALFAILFCWV), 516 to 536 (VFLTGVMSYLSAPLWFFFLVL), 573 to 593 (LFSTTLTLLFLPKLLSVMLIW), 600 to 620 (FGGVIRVTLSMLLEMFFSVLL), and 683 to 703 (FLWWLSPIVGSLILSIPVSVI).

The protein belongs to the glycosyltransferase 2 family. OpgH subfamily.

The protein resides in the cell inner membrane. Its pathway is glycan metabolism; osmoregulated periplasmic glucan (OPG) biosynthesis. In terms of biological role, involved in the biosynthesis of osmoregulated periplasmic glucans (OPGs). In Pseudomonas aeruginosa (strain LESB58), this protein is Glucans biosynthesis glucosyltransferase H.